Consider the following 391-residue polypeptide: ATP phosphoribosyltransferase regulatory subunit (391 aa).

This sequence belongs to the class-II aminoacyl-tRNA synthetase family. HisZ subfamily. As to quaternary structure, heteromultimer composed of HisG and HisZ subunits.

It localises to the cytoplasm. It participates in amino-acid biosynthesis; L-histidine biosynthesis; L-histidine from 5-phospho-alpha-D-ribose 1-diphosphate: step 1/9. Functionally, required for the first step of histidine biosynthesis. May allow the feedback regulation of ATP phosphoribosyltransferase activity by histidine. The chain is ATP phosphoribosyltransferase regulatory subunit from Bacillus pumilus (strain SAFR-032).